A 425-amino-acid polypeptide reads, in one-letter code: Spermatogenesis- and oogenesis-specific basic helix-loop-helix-containing protein 2 (425 aa).

The bHLH domain maps to 201 to 252 (KISLLHSSKEKLRRERIKYCCEQLRTLLPYVKGRKNDAASVLEATVDYVKYI).

Forms both hetero- and homodimers with SOHLH1.

Its subcellular location is the nucleus. The protein localises to the cytoplasm. Functionally, transcription regulator of both male and female germline differentiation. Suppresses genes involved in spermatogonial stem cells maintenance, and induces genes important for spermatogonial differentiation. Coordinates oocyte differentiation without affecting meiosis I. The sequence is that of Spermatogenesis- and oogenesis-specific basic helix-loop-helix-containing protein 2 (SOHLH2) from Homo sapiens (Human).